The primary structure comprises 246 residues: DNA repair protein RecO (246 aa).

This sequence belongs to the RecO family.

Its function is as follows. Involved in DNA repair and RecF pathway recombination. The sequence is that of DNA repair protein RecO from Alkaliphilus metalliredigens (strain QYMF).